A 91-amino-acid chain; its full sequence is ATP synthase subunit c 2 (91 aa).

The next 2 membrane-spanning stretches (helical) occupy residues 4–24 (FSMCVLGAAIGMAIGTLGTGI) and 53–73 (IGLAMIESLAIYALVICLIIL).

This sequence belongs to the ATPase C chain family. In terms of assembly, F-type ATPases have 2 components, F(1) - the catalytic core - and F(0) - the membrane proton channel. F(1) has five subunits: alpha(3), beta(3), gamma(1), delta(1), epsilon(1). F(0) has three main subunits: a(1), b(2) and c(10-14). The alpha and beta chains form an alternating ring which encloses part of the gamma chain. F(1) is attached to F(0) by a central stalk formed by the gamma and epsilon chains, while a peripheral stalk is formed by the delta and b chains.

The protein localises to the cell inner membrane. F(1)F(0) ATP synthase produces ATP from ADP in the presence of a proton or sodium gradient. F-type ATPases consist of two structural domains, F(1) containing the extramembraneous catalytic core and F(0) containing the membrane proton channel, linked together by a central stalk and a peripheral stalk. During catalysis, ATP synthesis in the catalytic domain of F(1) is coupled via a rotary mechanism of the central stalk subunits to proton translocation. In terms of biological role, key component of the F(0) channel; it plays a direct role in translocation across the membrane. A homomeric c-ring of between 10-14 subunits forms the central stalk rotor element with the F(1) delta and epsilon subunits. The sequence is that of ATP synthase subunit c 2 from Pelobacter propionicus (strain DSM 2379 / NBRC 103807 / OttBd1).